A 372-amino-acid polypeptide reads, in one-letter code: UDP-N-acetylglucosamine--N-acetylmuramyl-(pentapeptide) pyrophosphoryl-undecaprenol N-acetylglucosamine transferase (372 aa).

UDP-N-acetyl-alpha-D-glucosamine-binding positions include 14–16 (TGG), N128, R169, S201, I257, and Q302.

The protein belongs to the glycosyltransferase 28 family. MurG subfamily.

It localises to the cell inner membrane. It carries out the reaction di-trans,octa-cis-undecaprenyl diphospho-N-acetyl-alpha-D-muramoyl-L-alanyl-D-glutamyl-meso-2,6-diaminopimeloyl-D-alanyl-D-alanine + UDP-N-acetyl-alpha-D-glucosamine = di-trans,octa-cis-undecaprenyl diphospho-[N-acetyl-alpha-D-glucosaminyl-(1-&gt;4)]-N-acetyl-alpha-D-muramoyl-L-alanyl-D-glutamyl-meso-2,6-diaminopimeloyl-D-alanyl-D-alanine + UDP + H(+). Its pathway is cell wall biogenesis; peptidoglycan biosynthesis. In terms of biological role, cell wall formation. Catalyzes the transfer of a GlcNAc subunit on undecaprenyl-pyrophosphoryl-MurNAc-pentapeptide (lipid intermediate I) to form undecaprenyl-pyrophosphoryl-MurNAc-(pentapeptide)GlcNAc (lipid intermediate II). This is UDP-N-acetylglucosamine--N-acetylmuramyl-(pentapeptide) pyrophosphoryl-undecaprenol N-acetylglucosamine transferase from Bacteroides thetaiotaomicron (strain ATCC 29148 / DSM 2079 / JCM 5827 / CCUG 10774 / NCTC 10582 / VPI-5482 / E50).